The chain runs to 551 residues: RCC1 and BTB domain-containing protein 2 (551 aa).

RCC1 repeat units follow at residues 64–115 (NDEI…VLAT), 117–169 (DGEV…VLTS), 171–222 (GEVF…AVVD), 223–274 (TGEV…VLTD), 276–326 (GQIY…AAKT), and 328–382 (GGHV…TVAE). In terms of domain architecture, BTB spans 394–457 (ADLKFLVDGK…LYTDNISLSP (64 aa)).

In terms of tissue distribution, expressed in testis and heart (at protein level).

The protein resides in the cytoplasmic vesicle. The protein localises to the secretory vesicle. Its subcellular location is the acrosome. This chain is RCC1 and BTB domain-containing protein 2 (Rcbtb2), found in Mus musculus (Mouse).